The primary structure comprises 57 residues: COP9 signalosome complex subunit 9 (57 aa).

T26 is modified (phosphothreonine).

Belongs to the CSN9 family. As to quaternary structure, component of the CSN complex, composed of COPS1/GPS1, COPS2, COPS3, COPS4, COPS5, COPS6, COPS7 (COPS7A or COPS7B), COPS8 and COPS9. In the complex, it interacts directly with COPS3, COPS5 and COPS6.

It is found in the nucleus. The protein localises to the cytoplasm. The protein resides in the nucleoplasm. Component of the COP9 signalosome complex (CSN), a complex involved in various cellular and developmental processes. The CSN complex is an essential regulator of the ubiquitin (Ubl) conjugation pathway by mediating the deneddylation of the cullin subunits of SCF-type E3 ligase complexes, leading to decrease the Ubl ligase activity of SCF-type complexes such as SCF, CSA or DDB2. The complex is also involved in phosphorylation of p53/TP53, c-jun/JUN, IkappaBalpha/NFKBIA, ITPK1 and IRF8/ICSBP, possibly via its association with CK2 and PKD kinases. CSN-dependent phosphorylation of TP53 and JUN promotes and protects degradation by the Ubl system, respectively. Plays a role in cell proliferation. The protein is COP9 signalosome complex subunit 9 of Bos taurus (Bovine).